The following is a 424-amino-acid chain: Otefin (424 aa).

The region spanning 1–30 is the LEM domain; sequence MADVDDFDSLSNAELRAKMLAQGLPNIPVT. The tract at residues 1-50 is required for binding to Med and germline stem cell maintenance; it reads MADVDDFDSLSNAELRAKMLAQGLPNIPVTDSSRKVLVKRLRASIGGQAS. Residues 42 to 186 form a disordered region; sequence RASIGGQASP…SSKRADREEN (145 aa). Phosphoserine occurs at positions 44, 50, and 54. At Thr63 the chain carries Phosphothreonine. Residues 65-80 show a composition bias toward low complexity; the sequence is APAPGAPSAPAAASTP. A Nuclear localization signal motif is present at residues 92 to 99; that stretch reads ATKARRTI. Basic and acidic residues predominate over residues 103–133; that stretch reads EAKEPVRRLPEEAIRRRPDEADRLRSEEPVA. Ser152 is modified (phosphoserine). Over residues 157–170 the composition is skewed to basic and acidic residues; the sequence is SERKVVEPLRKPET. A phosphoserine mark is found at Ser192 and Ser198. The interval 259-278 is disordered; that stretch reads PSVPSARAQTTSSTRSYDYA. Residues 262–274 show a composition bias toward low complexity; sequence PSARAQTTSSTRS. The interval 271 to 400 is required for binding to Med; that stretch reads STRSYDYASN…NRWLNSLEQK (130 aa). Ser321 is modified (phosphoserine). Position 324 is a phosphothreonine (Thr324). Phosphoserine is present on Ser326. Thr358 carries the phosphothreonine modification. Phosphoserine is present on residues Ser378 and Ser385. An essential for nuclear membrane localization and germline stem cell maintenance region spans residues 400–424; that stretch reads KYHIKSKLFIVLLVLLLIGVYYIFY. The tract at residues 406–424 is essential for nuclear membrane localization; that stretch reads KLFIVLLVLLLIGVYYIFY.

Interacts with Med. Interacts with Lam. Interacts with aurA, alphaTub84B, gammaTub23C and gammaTub37C. Interacts with Nemp. Post-translationally, phosphorylation at Thr-63 by aurA may be required for exit from mitosis. May be phosphorylated by Cdk1 and Pka-C1. In terms of tissue distribution, expressed in all cell types of the germarium and testis. Expressed in nurse cells, follicle cells and oocytes.

It is found in the nucleus inner membrane. It localises to the nucleus. Its subcellular location is the nucleoplasm. The protein resides in the cytoplasm. The protein localises to the chromosome. It is found in the cytoskeleton. It localises to the spindle pole. Its subcellular location is the microtubule organizing center. The protein resides in the centrosome. Functionally, inner nuclear membrane protein. Involved in the attachment of membrane vesicles to chromatin during nuclear assembly, and is probably required for centrosome maturation and cell cycle progression during mitosis. Essential for differentiation of certain tissues and the maintenance of progenitor cell populations. Required for the differentiation and maintenance of male and female germline stem cells (GSCs), as well as the maintenance of somatic cells in the GSC niche. This role is likely to be independent of the BMP (Dpp) pathway that negatively regulates bam transcription during GSC differentiation. During development, plays essential and redundant functions with the other LEM domain proteins; bocks and MAN1. Also has a redundant but important role with bocks during larval development. The sequence is that of Otefin from Drosophila melanogaster (Fruit fly).